A 32-amino-acid chain; its full sequence is MASEIFGTAALFWVLIPLGLAGGALLLKLQGD.

The chain crosses the membrane as a helical span at residues 9–27; that stretch reads AALFWVLIPLGLAGGALLL.

The protein belongs to the PetM family. The 4 large subunits of the cytochrome b6-f complex are cytochrome b6, subunit IV (17 kDa polypeptide, PetD), cytochrome f and the Rieske protein, while the 4 small subunits are PetG, PetL, PetM and PetN. The complex functions as a dimer.

It localises to the cellular thylakoid membrane. Its function is as follows. Component of the cytochrome b6-f complex, which mediates electron transfer between photosystem II (PSII) and photosystem I (PSI), cyclic electron flow around PSI, and state transitions. The protein is Cytochrome b6-f complex subunit 7 of Synechococcus sp. (strain RCC307).